The primary structure comprises 75 residues: Small ribosomal subunit protein eS28 (75 aa).

Belongs to the eukaryotic ribosomal protein eS28 family.

The chain is Small ribosomal subunit protein eS28 from Methanococcus aeolicus (strain ATCC BAA-1280 / DSM 17508 / OCM 812 / Nankai-3).